A 451-amino-acid polypeptide reads, in one-letter code: Tol-Pal system protein TolB 1 (451 aa).

A signal peptide spans 1–19; the sequence is MTLRMLFAFALLAAAPAQA. Over residues 18–29 the composition is skewed to low complexity; the sequence is QAQQTEPQPAEE. 2 disordered regions span residues 18-37 and 431-451; these read QAQQ…GTVS and NERR…PLLP.

This sequence belongs to the TolB family. As to quaternary structure, the Tol-Pal system is composed of five core proteins: the inner membrane proteins TolA, TolQ and TolR, the periplasmic protein TolB and the outer membrane protein Pal. They form a network linking the inner and outer membranes and the peptidoglycan layer.

Its subcellular location is the periplasm. Functionally, part of the Tol-Pal system, which plays a role in outer membrane invagination during cell division and is important for maintaining outer membrane integrity. In Novosphingobium aromaticivorans (strain ATCC 700278 / DSM 12444 / CCUG 56034 / CIP 105152 / NBRC 16084 / F199), this protein is Tol-Pal system protein TolB 1.